A 340-amino-acid polypeptide reads, in one-letter code: Latency-related protein 1 (340 aa).

Disordered regions lie at residues 13 to 96 (AALW…PNRQ) and 254 to 340 (RLPG…PPRP). 2 repeat units span residues 27–43 (PTPT…PRTP) and 59–75 (PTPT…PRTP). Residues 27-75 (PTPTHPHSHAPPLPRTPTPSHPHSRAPPLPRAPTPTHPHSHAPPLPRTP) are 2 X 17 AA repeats. Over residues 35–73 (HAPPLPRTPTPSHPHSRAPPLPRAPTPTHPHSHAPPLPR) the composition is skewed to pro residues. Positions 287–307 (ARGGGSGGGRGPGGGRGGPRG) are enriched in gly residues. Over residues 308–326 (SRGRGGRGRGGRGGGRRGR) the composition is skewed to basic residues.

The chain is Latency-related protein 1 from Human herpesvirus 1 (strain F) (HHV-1).